Reading from the N-terminus, the 363-residue chain is Protein disulfide-isomerase 1 (363 aa).

An N-terminal signal peptide occupies residues 1 to 20 (MKILLFVTLIALAFVALCSA). 2 consecutive Thioredoxin domains span residues 21–132 (EGNV…NHAK) and 133–285 (TNVK…AAAE). Residues C51, C54, C172, and C175 each act as nucleophile in the active site. Disulfide bonds link C51–C54 and C172–C175.

The protein belongs to the protein disulfide isomerase family.

It localises to the endoplasmic reticulum lumen. It carries out the reaction Catalyzes the rearrangement of -S-S- bonds in proteins.. Participates in the folding of proteins containing disulfide bonds, may be involved in glycosylation, prolyl hydroxylation and triglyceride transfer. This Dictyostelium discoideum (Social amoeba) protein is Protein disulfide-isomerase 1 (pdi1).